Consider the following 193-residue polypeptide: MNYEAIVIGVSAGGINAMKTILPTLPTQFGIPIVIVQHIGARSDGEWFRILEKLCNIKIKEAEEKEEIKSGMVYVAPPNYHLLIEKDKTFSFSIGERVNFSRPSIDVLFETASEVYEDKLIGVILTGANSDGAQGLKKIKENGGLAVVQDPLTAEIALMPRSAIEATSVDYVLSLEKIAELFIRLDQNNLEQR.

In terms of domain architecture, CheB-type methylesterase spans 1-179; that stretch reads MNYEAIVIGV…DYVLSLEKIA (179 aa). Catalysis depends on residues S11, H38, and D131.

Belongs to the CheB family.

The protein resides in the cytoplasm. The enzyme catalyses [protein]-L-glutamate 5-O-methyl ester + H2O = L-glutamyl-[protein] + methanol + H(+). It catalyses the reaction L-glutaminyl-[protein] + H2O = L-glutamyl-[protein] + NH4(+). Its function is as follows. May be involved in chemotaxis. The protein is Putative protein-glutamate methylesterase/protein-glutamine glutaminase (cheB2) of Leptospira interrogans serogroup Icterohaemorrhagiae serovar copenhageni (strain Fiocruz L1-130).